The chain runs to 200 residues: Holliday junction resolvase RecU (200 aa).

Mg(2+) contacts are provided by Thr-85, Asp-87, Glu-100, and Gln-119.

It belongs to the RecU family. Requires Mg(2+) as cofactor.

It is found in the cytoplasm. The catalysed reaction is Endonucleolytic cleavage at a junction such as a reciprocal single-stranded crossover between two homologous DNA duplexes (Holliday junction).. In terms of biological role, endonuclease that resolves Holliday junction intermediates in genetic recombination. Cleaves mobile four-strand junctions by introducing symmetrical nicks in paired strands. Promotes annealing of linear ssDNA with homologous dsDNA. Required for DNA repair, homologous recombination and chromosome segregation. The polypeptide is Holliday junction resolvase RecU (Bacillus cytotoxicus (strain DSM 22905 / CIP 110041 / 391-98 / NVH 391-98)).